A 92-amino-acid polypeptide reads, in one-letter code: Putative pterin-4-alpha-carbinolamine dehydratase (92 aa).

This sequence belongs to the pterin-4-alpha-carbinolamine dehydratase family.

It catalyses the reaction (4aS,6R)-4a-hydroxy-L-erythro-5,6,7,8-tetrahydrobiopterin = (6R)-L-erythro-6,7-dihydrobiopterin + H2O. The protein is Putative pterin-4-alpha-carbinolamine dehydratase of Acidobacterium capsulatum (strain ATCC 51196 / DSM 11244 / BCRC 80197 / JCM 7670 / NBRC 15755 / NCIMB 13165 / 161).